Consider the following 41-residue polypeptide: Large ribosomal subunit protein bL36 (41 aa).

Belongs to the bacterial ribosomal protein bL36 family.

In Phenylobacterium zucineum (strain HLK1), this protein is Large ribosomal subunit protein bL36.